The chain runs to 263 residues: MTTKPQKPHILVCNDDGIEGLGLHALAASMKKLGSVTVVAPAEPQSGKSHGMTLGEPLRIRRYQKNNRFFGYTVSGTPVDCIKVALSHILDAKPDLIVSGINYGSNTAMNSLYSGTVAAAREGAIQNVPSLAFSLTTYENADFTYAAKFARQLAREVLRRGMPPDTILSANIPNVPEKEIRGILFTRQGRSRWEESTIERHDMYGNPYYWLAGSLQLHDNDLAEDEYAVRHNYVAVTPITCDMTDHRFRSELETWGLQNTIKK.

4 residues coordinate a divalent metal cation: aspartate 15, aspartate 16, serine 46, and asparagine 102.

Belongs to the SurE nucleotidase family. It depends on a divalent metal cation as a cofactor.

The protein localises to the cytoplasm. It carries out the reaction a ribonucleoside 5'-phosphate + H2O = a ribonucleoside + phosphate. Nucleotidase that shows phosphatase activity on nucleoside 5'-monophosphates. The polypeptide is 5'-nucleotidase SurE (Chlorobaculum tepidum (strain ATCC 49652 / DSM 12025 / NBRC 103806 / TLS) (Chlorobium tepidum)).